The chain runs to 264 residues: Small ribosomal subunit protein uS3 (264 aa).

Positions 39–107 constitute a KH type-2 domain; that stretch reads VREYLKKKLK…PVHVNIEEIR (69 aa). A disordered region spans residues 214-264; the sequence is PVETAAPREEERRPRRAPRGDRPDGARNGRPGGGRGRAPRKADAAPAPEGE. The segment covering 219–240 has biased composition (basic and acidic residues); that stretch reads APREEERRPRRAPRGDRPDGAR.

This sequence belongs to the universal ribosomal protein uS3 family. As to quaternary structure, part of the 30S ribosomal subunit. Forms a tight complex with proteins S10 and S14.

In terms of biological role, binds the lower part of the 30S subunit head. Binds mRNA in the 70S ribosome, positioning it for translation. The sequence is that of Small ribosomal subunit protein uS3 from Bordetella avium (strain 197N).